The following is a 218-amino-acid chain: Protein-methionine-sulfoxide reductase heme-binding subunit MsrQ (218 aa).

Helical transmembrane passes span 8–28 (VIVA…LLGW), 60–80 (FLLI…AVLI), 86–106 (LGLY…TLDL), 121–141 (PYIT…ITST), and 155–175 (VHML…WLVK).

The protein belongs to the MsrQ family. In terms of assembly, heterodimer of a catalytic subunit (MsrP) and a heme-binding subunit (MsrQ). Requires FMN as cofactor. Heme b is required as a cofactor.

It localises to the cell inner membrane. Part of the MsrPQ system that repairs oxidized periplasmic proteins containing methionine sulfoxide residues (Met-O), using respiratory chain electrons. Thus protects these proteins from oxidative-stress damage caused by reactive species of oxygen and chlorine generated by the host defense mechanisms. MsrPQ is essential for the maintenance of envelope integrity under bleach stress, rescuing a wide series of structurally unrelated periplasmic proteins from methionine oxidation. MsrQ provides electrons for reduction to the reductase catalytic subunit MsrP, using the quinone pool of the respiratory chain. In Xanthomonas oryzae pv. oryzae (strain MAFF 311018), this protein is Protein-methionine-sulfoxide reductase heme-binding subunit MsrQ.